Consider the following 181-residue polypeptide: ADP-ribosylation factor-like protein 1 (181 aa).

G2 carries N-myristoyl glycine lipidation. GTP is bound by residues 24–31, 45–48, G70, 126–129, and 160–161; these read GLDGAGKT, TIPT, NKQD, and AT. 2 residues coordinate Mg(2+): T31 and T48.

Belongs to the small GTPase superfamily. Arf family. The GTP-bound form interacts with GOLGA1. The GTP-bound form interacts with GOLGA4 and RGPD8. The GTP-bound form directly interacts with ARFIP2. Binds to SCOC, preferentially in its GTP-bound form. May interact with UNC119. Interacts with ARFIP1; this interaction directs ARFIP1 to the trans-Golgi membranes. Interacts with ARFGEF1 (via N-terminus). Detected in heart, liver, lung and liver (at protein level). Detected in fetal heart, lung, liver and kidney. Detected in adult heart, placenta, lung, liver, skeletal muscle, kidney and pancreas.

The protein localises to the golgi apparatus membrane. It is found in the golgi apparatus. It localises to the trans-Golgi network membrane. Its subcellular location is the membrane. Its function is as follows. GTP-binding protein that recruits several effectors, such as golgins, arfaptins and Arf-GEFs to the trans-Golgi network, and modulates their functions at the Golgi complex. Plays thereby a role in a wide range of fundamental cellular processes, including cell polarity, innate immunity, or protein secretion mediated by arfaptins, which were shown to play a role in maintaining insulin secretion from pancreatic beta cells. The polypeptide is ADP-ribosylation factor-like protein 1 (ARL1) (Homo sapiens (Human)).